The chain runs to 143 residues: uncharacterized protein (143 aa).

Residues 5–137 (DARLASDLSL…LRSAADLMLA (133 aa)) enclose the HTH marR-type domain. A DNA-binding region (H-T-H motif) is located at residues 51-74 (PGALAIRERVRPPSMTRVIASLAD).

In terms of assembly, homodimer.

This is an uncharacterized protein from Mycobacterium bovis (strain ATCC BAA-935 / AF2122/97).